A 1133-amino-acid chain; its full sequence is Early transcription factor large subunit homolog (1133 aa).

Residues 52 to 352 (KGGRAFFPCD…PNGQPLQRQQ (301 aa)) form the Helicase ATP-binding domain. 99–106 (WQTGTGKS) serves as a coordination point for ATP. The DEAH box signature appears at 281–284 (DEIH). In terms of domain architecture, Helicase C-terminal spans 524–724 (MMKDILSIIR…EGDKALRKHA (201 aa)).

The protein belongs to the DEAD box helicase family. DEAH subfamily.

The protein resides in the virion. It carries out the reaction ATP + H2O = ADP + phosphate + H(+). In terms of biological role, putative initation factor. This is Early transcription factor large subunit homolog from Ornithodoros (relapsing fever ticks).